Here is a 557-residue protein sequence, read N- to C-terminus: Potassium-transporting ATPase potassium-binding subunit (557 aa).

A run of 12 helical transmembrane segments spans residues Gly5 to Ser25, Leu63 to Gly83, Gly132 to Ile152, Leu170 to Ile190, Phe253 to Val273, Leu283 to Val303, Val329 to Ala349, Ala356 to Val376, Gly379 to Gly399, Leu416 to Met436, Leu484 to Ala504, and Leu526 to Ala546.

Belongs to the KdpA family. In terms of assembly, the system is composed of three essential subunits: KdpA, KdpB and KdpC.

It localises to the cell inner membrane. In terms of biological role, part of the high-affinity ATP-driven potassium transport (or Kdp) system, which catalyzes the hydrolysis of ATP coupled with the electrogenic transport of potassium into the cytoplasm. This subunit binds the periplasmic potassium ions and delivers the ions to the membrane domain of KdpB through an intramembrane tunnel. The protein is Potassium-transporting ATPase potassium-binding subunit of Shigella flexneri.